We begin with the raw amino-acid sequence, 155 residues long: Ribosomal RNA large subunit methyltransferase H (155 aa).

Residues Leu-73, Gly-104, and 123–128 (LSPLTL) contribute to the S-adenosyl-L-methionine site.

This sequence belongs to the RNA methyltransferase RlmH family. In terms of assembly, homodimer.

Its subcellular location is the cytoplasm. It carries out the reaction pseudouridine(1915) in 23S rRNA + S-adenosyl-L-methionine = N(3)-methylpseudouridine(1915) in 23S rRNA + S-adenosyl-L-homocysteine + H(+). Functionally, specifically methylates the pseudouridine at position 1915 (m3Psi1915) in 23S rRNA. This Pseudomonas aeruginosa (strain LESB58) protein is Ribosomal RNA large subunit methyltransferase H.